A 142-amino-acid polypeptide reads, in one-letter code: Domesticated amidase effector 2 (142 aa).

The N-terminal stretch at 1-35 (MKLFLISAALVVLGLAAVADAIGCSDPSPFQGRWV) is a signal peptide. Active-site residues include Cys43 and His94.

It belongs to the cell wall amidase Dae2/Tae2-like family. May be post-translationally modified, since the saliva wild-type protein is slightly heavier than the recombinant one. In terms of tissue distribution, detected in salivary glands and in the gut (at protein level).

The protein resides in the secreted. Functionally, tick gut and saliva antibacterial peptide that directly antagonizes host skin commensals which enter the ticks during feeding. Acts as a cell wall hydrolase that cleaves the bond between gamma-D-glutamate-meso-diaminopimelate of a peptide stem and D-alanine of another peptide stem in peptidoglycans. In vitro, degrades peptidoglycans from both Gram-negative and Gram-positive bacteria. Is not able to traverse the protective outer membrane of Gram-negative bacteria. Is not able to kill Borrelia burgdorferi, one of the Lyme disease-causing bacteria. The sequence is that of Domesticated amidase effector 2 from Ixodes scapularis (Black-legged tick).